The chain runs to 169 residues: Crossover junction endodeoxyribonuclease RuvC (169 aa).

Active-site residues include D11, E71, and H143. Mg(2+)-binding residues include D11, E71, and H143.

It belongs to the RuvC family. As to quaternary structure, homodimer which binds Holliday junction (HJ) DNA. The HJ becomes 2-fold symmetrical on binding to RuvC with unstacked arms; it has a different conformation from HJ DNA in complex with RuvA. In the full resolvosome a probable DNA-RuvA(4)-RuvB(12)-RuvC(2) complex forms which resolves the HJ. Mg(2+) is required as a cofactor.

It localises to the cytoplasm. It carries out the reaction Endonucleolytic cleavage at a junction such as a reciprocal single-stranded crossover between two homologous DNA duplexes (Holliday junction).. Its function is as follows. The RuvA-RuvB-RuvC complex processes Holliday junction (HJ) DNA during genetic recombination and DNA repair. Endonuclease that resolves HJ intermediates. Cleaves cruciform DNA by making single-stranded nicks across the HJ at symmetrical positions within the homologous arms, yielding a 5'-phosphate and a 3'-hydroxyl group; requires a central core of homology in the junction. The consensus cleavage sequence is 5'-(A/T)TT(C/G)-3'. Cleavage occurs on the 3'-side of the TT dinucleotide at the point of strand exchange. HJ branch migration catalyzed by RuvA-RuvB allows RuvC to scan DNA until it finds its consensus sequence, where it cleaves and resolves the cruciform DNA. The chain is Crossover junction endodeoxyribonuclease RuvC from Mesorhizobium japonicum (strain LMG 29417 / CECT 9101 / MAFF 303099) (Mesorhizobium loti (strain MAFF 303099)).